Here is a 510-residue protein sequence, read N- to C-terminus: NAD(P)H-quinone oxidoreductase subunit 2 B, chloroplastic (510 aa).

14 helical membrane-spanning segments follow: residues 31-51 (FIFPECILIFGLILLLMIDLT), 59-79 (WFYFISSTSLVISITALLFRW), 99-119 (IFQFLILLCSTLCIPLSVEYI), 124-144 (MAITEFLLFVLTATLGGMFLC), 149-169 (LITIFVALECFSLCSYLLSGY), 184-204 (LLMGGASSSILVYGFSWLYGL), 229-249 (ISIALIFITVGLGFKLSLAPF), 261-281 (PTPVVAFLSVTSKVAALALAT), 295-315 (WHLLLEILAILSMILGNLLAI), 323-343 (MLAYSSIGQIGYVIIGIIVGD), 354-374 (YMLFYISMNLGTFACIVLFGL), 395-415 (ALSLALCLLSLGGLPPLAGFF), 418-438 (LYLFWCGWQAGLYFLVSIGLL), and 484-504 (MTVCVIASTILGISMNPILAI).

Belongs to the complex I subunit 2 family. As to quaternary structure, NDH is composed of at least 16 different subunits, 5 of which are encoded in the nucleus.

It localises to the plastid. The protein localises to the chloroplast thylakoid membrane. It carries out the reaction a plastoquinone + NADH + (n+1) H(+)(in) = a plastoquinol + NAD(+) + n H(+)(out). The enzyme catalyses a plastoquinone + NADPH + (n+1) H(+)(in) = a plastoquinol + NADP(+) + n H(+)(out). NDH shuttles electrons from NAD(P)H:plastoquinone, via FMN and iron-sulfur (Fe-S) centers, to quinones in the photosynthetic chain and possibly in a chloroplast respiratory chain. The immediate electron acceptor for the enzyme in this species is believed to be plastoquinone. Couples the redox reaction to proton translocation, and thus conserves the redox energy in a proton gradient. The protein is NAD(P)H-quinone oxidoreductase subunit 2 B, chloroplastic of Hordeum vulgare (Barley).